The chain runs to 152 residues: Deoxyuridine 5'-triphosphate nucleotidohydrolase (152 aa).

Residues 71-73 (RSG), N84, 88-90 (LID), and K98 contribute to the substrate site.

It belongs to the dUTPase family. Mg(2+) is required as a cofactor.

The catalysed reaction is dUTP + H2O = dUMP + diphosphate + H(+). It participates in pyrimidine metabolism; dUMP biosynthesis; dUMP from dCTP (dUTP route): step 2/2. Functionally, this enzyme is involved in nucleotide metabolism: it produces dUMP, the immediate precursor of thymidine nucleotides and it decreases the intracellular concentration of dUTP so that uracil cannot be incorporated into DNA. In Legionella pneumophila subsp. pneumophila (strain Philadelphia 1 / ATCC 33152 / DSM 7513), this protein is Deoxyuridine 5'-triphosphate nucleotidohydrolase.